Reading from the N-terminus, the 130-residue chain is Small ribosomal subunit protein uS8B (130 aa).

The protein belongs to the universal ribosomal protein uS8 family. As to quaternary structure, component of the small ribosomal subunit (SSU). Mature yeast ribosomes consist of a small (40S) and a large (60S) subunit. The 40S small subunit contains 1 molecule of ribosomal RNA (18S rRNA) and 33 different proteins (encoded by 57 genes). The large 60S subunit contains 3 rRNA molecules (25S, 5.8S and 5S rRNA) and 46 different proteins (encoded by 81 genes).

The protein resides in the cytoplasm. In terms of biological role, component of the ribosome, a large ribonucleoprotein complex responsible for the synthesis of proteins in the cell. The small ribosomal subunit (SSU) binds messenger RNAs (mRNAs) and translates the encoded message by selecting cognate aminoacyl-transfer RNA (tRNA) molecules. The large subunit (LSU) contains the ribosomal catalytic site termed the peptidyl transferase center (PTC), which catalyzes the formation of peptide bonds, thereby polymerizing the amino acids delivered by tRNAs into a polypeptide chain. The nascent polypeptides leave the ribosome through a tunnel in the LSU and interact with protein factors that function in enzymatic processing, targeting, and the membrane insertion of nascent chains at the exit of the ribosomal tunnel. The chain is Small ribosomal subunit protein uS8B from Saccharomyces cerevisiae (strain ATCC 204508 / S288c) (Baker's yeast).